Here is a 63-residue protein sequence, read N- to C-terminus: Large ribosomal subunit protein bL32 (63 aa).

The segment at 1–22 (MANPKAKMSKSRRDKRRAQFNA) is disordered. Residues 7-18 (KMSKSRRDKRRA) are compositionally biased toward basic residues.

Belongs to the bacterial ribosomal protein bL32 family.

The protein is Large ribosomal subunit protein bL32 of Chlorobium limicola (strain DSM 245 / NBRC 103803 / 6330).